The primary structure comprises 107 residues: Nucleoid-associated protein amb4104 (107 aa).

The protein belongs to the YbaB/EbfC family. In terms of assembly, homodimer.

It is found in the cytoplasm. Its subcellular location is the nucleoid. In terms of biological role, binds to DNA and alters its conformation. May be involved in regulation of gene expression, nucleoid organization and DNA protection. In Paramagnetospirillum magneticum (strain ATCC 700264 / AMB-1) (Magnetospirillum magneticum), this protein is Nucleoid-associated protein amb4104.